Here is a 261-residue protein sequence, read N- to C-terminus: Imidazole glycerol phosphate synthase subunit HisF (261 aa).

Active-site residues include D16 and D135.

Belongs to the HisA/HisF family. In terms of assembly, heterodimer of HisH and HisF.

The protein localises to the cytoplasm. It carries out the reaction 5-[(5-phospho-1-deoxy-D-ribulos-1-ylimino)methylamino]-1-(5-phospho-beta-D-ribosyl)imidazole-4-carboxamide + L-glutamine = D-erythro-1-(imidazol-4-yl)glycerol 3-phosphate + 5-amino-1-(5-phospho-beta-D-ribosyl)imidazole-4-carboxamide + L-glutamate + H(+). It participates in amino-acid biosynthesis; L-histidine biosynthesis; L-histidine from 5-phospho-alpha-D-ribose 1-diphosphate: step 5/9. In terms of biological role, IGPS catalyzes the conversion of PRFAR and glutamine to IGP, AICAR and glutamate. The HisF subunit catalyzes the cyclization activity that produces IGP and AICAR from PRFAR using the ammonia provided by the HisH subunit. In Mycobacterium leprae (strain Br4923), this protein is Imidazole glycerol phosphate synthase subunit HisF.